The sequence spans 603 residues: Putative lipase atg15 (603 aa).

Residues 1–20 are Cytoplasmic-facing; that stretch reads MDQPHRRTRKWHLMDLSVST. The helical; Signal-anchor for type II membrane protein transmembrane segment at 21-41 threads the bilayer; it reads LLMSLALVLPSCVSAYQPVYF. At 42 to 603 the chain is on the lumenal side; it reads RSQEATPFIP…ITPAPILIDL (562 aa). N-linked (GlcNAc...) asparagine glycosylation is found at Asn-166, Asn-201, Asn-223, Asn-281, and Asn-305. Ser-321 functions as the Charge relay system in the catalytic mechanism. Asn-467 is a glycosylation site (N-linked (GlcNAc...) asparagine).

The protein belongs to the AB hydrolase superfamily. Lipase family. As to quaternary structure, binds to both phosphatidylinositol (PI) and phosphatidylinositol 3,5-bisphosphate (PIP2).

The protein localises to the endosome. It localises to the multivesicular body membrane. The protein resides in the prevacuolar compartment membrane. The enzyme catalyses a triacylglycerol + H2O = a diacylglycerol + a fatty acid + H(+). In terms of biological role, lipase which is essential for lysis of subvacuolar cytoplasm to vacuole targeted bodies and intravacuolar autophagic bodies. Involved in the lysis of intravacuolar multivesicular body (MVB) vesicles. The intravacuolar membrane disintegration by atg15 is critical to life span extension. This chain is Putative lipase atg15 (atg15), found in Emericella nidulans (strain FGSC A4 / ATCC 38163 / CBS 112.46 / NRRL 194 / M139) (Aspergillus nidulans).